Reading from the N-terminus, the 503-residue chain is MEKGGNIQLEIPDFSNSVLSHLNQLRMQGRLCDIVVNVQGQAFRAHKVVLAASSPYFRDHMSLNEMSTVSISVIKNPTVFEQLLSFCYTGRICLQLADIISYLTAASFLQMQHIIDKCTQILEGIHFKINVAEVEAELSQTRTKHQERPPESHRVTPNLNRSLSPRHNTPKGNRRGQVSAVLDIRELSPPEESTSPQIIEPSSDVESREPILRINRAGQWYVETGVADRGGRSDDEVRVLGAVHIKTENLEEWLGPENQPSGEDGSSAEEVTAMVIDTTGHGSVGQENYTLGSSGAKVARPTSSEVDRFSPSGSVVPLTERHRARSESPGRMDEPKQPSSQVEESAMMGVSGYVEYLREQEVSERWFRYNPRLTCIYCAKSFNQKGSLDRHMRLHMGITPFVCRMCGKKYTRKDQLEYHIRKHTGNKPFHCHVCGKSFPFQAILNQHFRKNHPGCIPLEGPHSISPETTVTSRGQAEEESPSQEETVAPGEAVQGSVSTTGPD.

Residues 32-96 enclose the BTB domain; it reads CDIVVNVQGQ…CYTGRICLQL (65 aa). 2 disordered regions span residues 140-206 and 280-344; these read QTRT…SDVE and GHGS…QVEE. The segment covering 144 to 154 has biased composition (basic and acidic residues); the sequence is KHQERPPESHR. Over residues 155–167 the composition is skewed to polar residues; it reads VTPNLNRSLSPRH. Residues 319–336 show a composition bias toward basic and acidic residues; the sequence is TERHRARSESPGRMDEPK. 3 consecutive C2H2-type zinc fingers follow at residues 373–395, 401–423, and 429–452; these read LTCI…MRLH, FVCR…IRKH, and FHCH…RKNH. The tract at residues 457 to 503 is disordered; sequence PLEGPHSISPETTVTSRGQAEEESPSQEETVAPGEAVQGSVSTTGPD. A compositionally biased stretch (polar residues) spans 465–474; it reads SPETTVTSRG.

Its subcellular location is the nucleus. Functionally, may be involved in transcriptional regulation. This Homo sapiens (Human) protein is Zinc finger and BTB domain-containing protein 37 (ZBTB37).